Here is a 358-residue protein sequence, read N- to C-terminus: Molybdenum import ATP-binding protein ModC (358 aa).

The 226-residue stretch at 3 to 228 (INVKQKLGDL…LEMRPWLPAK (226 aa)) folds into the ABC transporter domain. 30–37 (GRSGAGKT) contributes to the ATP binding site. In terms of domain architecture, Mop spans 289-356 (QTSIRNVLLA…IKGVSVTKDD (68 aa)).

The protein belongs to the ABC transporter superfamily. Molybdate importer (TC 3.A.1.8) family. In terms of assembly, the complex is composed of two ATP-binding proteins (ModC), two transmembrane proteins (ModB) and a solute-binding protein (ModA).

It localises to the cell inner membrane. It carries out the reaction molybdate(out) + ATP + H2O = molybdate(in) + ADP + phosphate + H(+). In terms of biological role, part of the ABC transporter complex ModABC involved in molybdenum import. Responsible for energy coupling to the transport system. The chain is Molybdenum import ATP-binding protein ModC from Photobacterium profundum (strain SS9).